The primary structure comprises 356 residues: MAKKVVVGMSGGVDSSVAAHLLKEQGYEVIGVTMQVWQEDDYYEDMESGCCSLSAVEDAKMVAYHLNIPHYVMNFKEAFKKNVIDYFIQEYMEGKTPNPCIACNKYIKFDELLKRAMDLGADYVATGHYATVEKINDRYTLRKSKDHNKDQTYALYNLTQFQLAHTLMPCGIYKKEEIREIAREIGLMVHSKRDSEEICFIPDNDHGAYIKRITKDKVKEGNFIDKEGNVLGKHKGIVYYTLGQRKGLGLSFGVPTYVIDIKPYTNEVVLGSEEDIFKTDLVAKDVNFLPFENLTSPMKVEAKIRYSSKPAEATISCLDEERIKVKFTDRQRAITKGQSVVFYKDNILIGGGIIDS.

ATP-binding positions include 8 to 15 and methionine 34; that span reads GMSGGVDS. The active-site Nucleophile is cysteine 103. Cysteine 103 and cysteine 199 are disulfide-bonded. Glycine 127 contacts ATP. The interaction with tRNA stretch occupies residues 149–151; the sequence is KDQ. The active-site Cysteine persulfide intermediate is the cysteine 199. The interaction with tRNA stretch occupies residues 305–306; sequence RY.

The protein belongs to the MnmA/TRMU family.

Its subcellular location is the cytoplasm. It catalyses the reaction S-sulfanyl-L-cysteinyl-[protein] + uridine(34) in tRNA + AH2 + ATP = 2-thiouridine(34) in tRNA + L-cysteinyl-[protein] + A + AMP + diphosphate + H(+). Functionally, catalyzes the 2-thiolation of uridine at the wobble position (U34) of tRNA, leading to the formation of s(2)U34. This chain is tRNA-specific 2-thiouridylase MnmA, found in Clostridium kluyveri (strain ATCC 8527 / DSM 555 / NBRC 12016 / NCIMB 10680 / K1).